Consider the following 75-residue polypeptide: Stewaprin-a (75 aa).

A signal peptide spans 1-24; sequence MSSGGLLLLLGLLTLWAELIPVSG. One can recognise a WAP domain in the interval 27–72; sequence HPKKPGLCPPRPQKPPCVRECKNDWSCPGEQKCCRYGCIFECRDPI. 4 cysteine pairs are disulfide-bonded: Cys-34/Cys-60, Cys-43/Cys-64, Cys-47/Cys-59, and Cys-53/Cys-68.

It belongs to the venom waprin family. In terms of tissue distribution, expressed by the venom gland.

It localises to the secreted. In terms of biological role, damages membranes of susceptible bacteria. Has no hemolytic activity. Not toxic to mice. Does not inhibit the proteinases elastase and cathepsin G. In Hoplocephalus stephensii (Stephens's banded snake), this protein is Stewaprin-a.